A 265-amino-acid chain; its full sequence is 14-3-3-like protein GF14-D (265 aa).

The disordered stretch occupies residues 244–265 (DANDDGGDEIKEAAAPKEPGDQ). Residues 251–265 (DEIKEAAAPKEPGDQ) show a composition bias toward basic and acidic residues.

It belongs to the 14-3-3 family. Interacts with BZR1. Interacts with ABI5.

Functionally, is associated with a DNA binding complex that binds to the G box, a well-characterized cis-acting DNA regulatory element found in plant genes. The chain is 14-3-3-like protein GF14-D (GF14D) from Oryza sativa subsp. japonica (Rice).